Consider the following 83-residue polypeptide: Small ribosomal subunit protein uS17 (83 aa).

Belongs to the universal ribosomal protein uS17 family. As to quaternary structure, part of the 30S ribosomal subunit.

Functionally, one of the primary rRNA binding proteins, it binds specifically to the 5'-end of 16S ribosomal RNA. This Buchnera aphidicola subsp. Acyrthosiphon pisum (strain 5A) protein is Small ribosomal subunit protein uS17.